The following is a 257-amino-acid chain: Acetylglutamate kinase (257 aa).

Residues 41–42, Arg-63, and Asn-156 contribute to the substrate site; that span reads GG.

Belongs to the acetylglutamate kinase family. ArgB subfamily.

The protein resides in the cytoplasm. The catalysed reaction is N-acetyl-L-glutamate + ATP = N-acetyl-L-glutamyl 5-phosphate + ADP. It participates in amino-acid biosynthesis; L-arginine biosynthesis; N(2)-acetyl-L-ornithine from L-glutamate: step 2/4. Catalyzes the ATP-dependent phosphorylation of N-acetyl-L-glutamate. The chain is Acetylglutamate kinase from Geobacillus sp. (strain WCH70).